Reading from the N-terminus, the 671-residue chain is MEPIEQQLTELRTTLRHHEYLYHVMDAPEIPDAEYDRLMRELRELEAQRPDLITPDSPTQRVGAAPLTAFNQIRHEVPMLSLDNVFDEESFLAFNKRVQDRLKSTENVIWCCELKLDGLAVSILYENGVLVSAATRGDGTTGEDITSNVRTIRAIPLKLHGDNIPARLEVRGEVFLPQAGFEKINEDARRTGGKVFANPRNAAAGSLRQLDPRITAKRPLTFFCYGVGILEGGELPDTHLGRLLQFKAWGLPVSDRVTLCDSPQAVLDFYHNVEKDRPTLGFDIDGVVIKVNSLALQEQLGFVARAPRWAVAFKFPAQEQMTFVRDVEFQVGRTGAITPVARLEPVQVAGVLVSNATLHNADEIERLGLRIGDKVVIRRAGDVIPQVVNVVLSERPEETRPIVFPTHCPVCGSDVERVEGEAVTRCTGGLICSAQRKESLKHFVSRRAMDVDGMGDKIIDQLVEREYVHTPADLFRLTAGKLTGLDRMGPKSAQNVVNALEKAKATTFARFLYALGIREVGEATAAGLAAYFGTLEALQAATIDELQKVPDVGIVVATHVFNFFAEESNRDVIGQLLAEGVHWPAPVVINVQEIDSPFAGKTVVLTGSLSQMSRDDAKARLVALGAKVAGSVSKKTDLVIAGEAAGSKLAKAQELGITVIDEAEMIRLLGA.

NAD(+) contacts are provided by residues Asp32–Asp36, Ser81–Leu82, and Glu113. Lys115 serves as the catalytic N6-AMP-lysine intermediate. NAD(+)-binding residues include Arg136, Glu173, Lys290, and Lys314. Positions 408, 411, 426, and 432 each coordinate Zn(2+). The region spanning Glu593 to Ala671 is the BRCT domain.

This sequence belongs to the NAD-dependent DNA ligase family. LigA subfamily. Requires Mg(2+) as cofactor. Mn(2+) is required as a cofactor.

It carries out the reaction NAD(+) + (deoxyribonucleotide)n-3'-hydroxyl + 5'-phospho-(deoxyribonucleotide)m = (deoxyribonucleotide)n+m + AMP + beta-nicotinamide D-nucleotide.. In terms of biological role, DNA ligase that catalyzes the formation of phosphodiester linkages between 5'-phosphoryl and 3'-hydroxyl groups in double-stranded DNA using NAD as a coenzyme and as the energy source for the reaction. It is essential for DNA replication and repair of damaged DNA. The polypeptide is DNA ligase (Salmonella paratyphi B (strain ATCC BAA-1250 / SPB7)).